We begin with the raw amino-acid sequence, 357 residues long: Alanine racemase (357 aa).

Lys35 acts as the Proton acceptor; specific for D-alanine in catalysis. Lys35 bears the N6-(pyridoxal phosphate)lysine mark. Residue Arg131 coordinates substrate. Tyr256 acts as the Proton acceptor; specific for L-alanine in catalysis. A substrate-binding site is contributed by Met304.

The protein belongs to the alanine racemase family. Requires pyridoxal 5'-phosphate as cofactor.

The catalysed reaction is L-alanine = D-alanine. Its pathway is amino-acid biosynthesis; D-alanine biosynthesis; D-alanine from L-alanine: step 1/1. Its function is as follows. Catalyzes the interconversion of L-alanine and D-alanine. May also act on other amino acids. This chain is Alanine racemase (alr), found in Legionella pneumophila (strain Corby).